The sequence spans 404 residues: Argininosuccinate synthase (404 aa).

Residues 10 to 18 (AYSGGLDTS) and alanine 37 contribute to the ATP site. The L-citrulline site is built by tyrosine 90 and serine 95. Residue glycine 120 coordinates ATP. L-aspartate-binding residues include threonine 122, asparagine 126, and aspartate 127. Asparagine 126 lines the L-citrulline pocket. L-citrulline-binding residues include arginine 130, serine 181, serine 190, glutamate 266, and tyrosine 278. Positions 173–200 (DKRGESPFSTDANLLHTSSEGKVLEDPW) are disordered. Positions 179–192 (PFSTDANLLHTSSE) are enriched in polar residues.

Belongs to the argininosuccinate synthase family. Type 1 subfamily. In terms of assembly, homotetramer.

It localises to the cytoplasm. It carries out the reaction L-citrulline + L-aspartate + ATP = 2-(N(omega)-L-arginino)succinate + AMP + diphosphate + H(+). Its pathway is amino-acid biosynthesis; L-arginine biosynthesis; L-arginine from L-ornithine and carbamoyl phosphate: step 2/3. The protein is Argininosuccinate synthase of Novosphingobium aromaticivorans (strain ATCC 700278 / DSM 12444 / CCUG 56034 / CIP 105152 / NBRC 16084 / F199).